The chain runs to 465 residues: Iron transporter FTH1 (465 aa).

Over 1–11 the chain is Vacuolar; it reads MAFEDYFSFQI. The helical transmembrane segment at 12 to 32 threads the bilayer; sequence FFIFLRESLEIVVIVSILLTI. Residues 33–135 lie on the Cytoplasmic side of the membrane; sequence VKQGLSVEDD…LYQKLKIQIL (103 aa). Positions 44-66 are disordered; the sequence is PFEGSSSSAGLPSPNTNTNADST. Polar residues predominate over residues 46–66; that stretch reads EGSSSSAGLPSPNTNTNADST. Residues 136-156 traverse the membrane as a helical segment; sequence AGGAFGLLLCMLIGGAFVSIF. The Vacuolar segment spans residues 157 to 170; it reads YHIGTDLWTLSEHY. Residues 171–191 traverse the membrane as a helical segment; that stretch reads YEGVLSLVASVIISVMGLFFL. At 192–289 the chain is on the cytoplasmic side; it reads RMGKLREKFR…FFFRYSSSLS (98 aa). A helical membrane pass occupies residues 290-310; the sequence is LKICLVVATCFLYLIAAGLFS. Residues 311-358 lie on the Vacuolar side of the membrane; sequence KGVWQLELQDYVNKCNGQDMSEVGNGPGSYDISRSVWHVNCCNGEKDG. A helical transmembrane segment spans residues 359–379; sequence GWMIFTAIFGWTNSATVGSVI. Residues 380–465 are Cytoplasmic-facing; the sequence is SYNAYWLVLI…LIIDSSGSAN (86 aa). The tract at residues 433–465 is disordered; the sequence is TSELNSSTSEPDSQRRSKDSSVPLIIDSSGSAN. Ser449 and Ser453 each carry phosphoserine.

It belongs to the oxidase-dependent Fe transporter (OFeT) (TC 9.A.10.1) family. As to quaternary structure, interacts with FET5.

Its subcellular location is the vacuole membrane. High affinity iron transporter probably involved in transport of intravacuolar stores of iron. This is Iron transporter FTH1 (FTH1) from Saccharomyces cerevisiae (strain ATCC 204508 / S288c) (Baker's yeast).